Consider the following 163-residue polypeptide: Nucleotide-binding protein SACE_6882 (163 aa).

Belongs to the YajQ family.

Functionally, nucleotide-binding protein. This is Nucleotide-binding protein SACE_6882 from Saccharopolyspora erythraea (strain ATCC 11635 / DSM 40517 / JCM 4748 / NBRC 13426 / NCIMB 8594 / NRRL 2338).